Here is a 333-residue protein sequence, read N- to C-terminus: Ornithine carbamoyltransferase (333 aa).

Carbamoyl phosphate is bound by residues 56–59 (STRT), R107, and 134–137 (HPTQ). Residues N167, D231, and 235 to 236 (SM) contribute to the L-ornithine site. Residues 273–274 (CL) and R318 each bind carbamoyl phosphate.

It belongs to the aspartate/ornithine carbamoyltransferase superfamily. OTCase family.

The protein localises to the cytoplasm. The catalysed reaction is carbamoyl phosphate + L-ornithine = L-citrulline + phosphate + H(+). It functions in the pathway amino-acid degradation; L-arginine degradation via ADI pathway; carbamoyl phosphate from L-arginine: step 2/2. Functionally, reversibly catalyzes the transfer of the carbamoyl group from carbamoyl phosphate (CP) to the N(epsilon) atom of ornithine (ORN) to produce L-citrulline. In Clostridium botulinum (strain 657 / Type Ba4), this protein is Ornithine carbamoyltransferase.